The primary structure comprises 169 residues: Small ribosomal subunit protein uS5c (169 aa).

The S5 DRBM domain maps to 17 to 80; that stretch reads WQERVIQVRR…TDGRKNLINI (64 aa).

This sequence belongs to the universal ribosomal protein uS5 family. Part of the 30S ribosomal subunit. Contacts protein S4.

The protein resides in the plastid. It is found in the chloroplast. With S4 and S12 plays an important role in translational accuracy. The chain is Small ribosomal subunit protein uS5c (rps5) from Guillardia theta (Cryptophyte).